Consider the following 51-residue polypeptide: ATP synthase F(1) complex subunit epsilon, mitochondrial (51 aa).

3 positions are modified to N6-acetyllysine; alternate: K21, K32, and K37. An N6-succinyllysine; alternate mark is found at K21, K32, and K37. K44 is subject to N6-acetyllysine.

The protein belongs to the eukaryotic ATPase epsilon family. In terms of assembly, component of the ATP synthase complex composed at least of ATP5F1A/subunit alpha, ATP5F1B/subunit beta, ATP5MC1/subunit c (homooctomer), MT-ATP6/subunit a, MT-ATP8/subunit 8, ATP5ME/subunit e, ATP5MF/subunit f, ATP5MG/subunit g, ATP5MK/subunit k, ATP5MJ/subunit j, ATP5F1C/subunit gamma, ATP5F1D/subunit delta, ATP5F1E/subunit epsilon, ATP5PF/subunit F6, ATP5PB/subunit b, ATP5PD/subunit d, ATP5PO/subunit OSCP. ATP synthase complex consists of a soluble F(1) head domain (subunits alpha(3) and beta(3)) - the catalytic core - and a membrane F(0) domain - the membrane proton channel (subunits c, a, 8, e, f, g, k and j). These two domains are linked by a central stalk (subunits gamma, delta, and epsilon) rotating inside the F1 region and a stationary peripheral stalk (subunits F6, b, d, and OSCP).

The protein resides in the mitochondrion. Its subcellular location is the mitochondrion inner membrane. In terms of biological role, subunit epsilon, of the mitochondrial membrane ATP synthase complex (F(1)F(0) ATP synthase or Complex V) that produces ATP from ADP in the presence of a proton gradient across the membrane which is generated by electron transport complexes of the respiratory chain. ATP synthase complex consist of a soluble F(1) head domain - the catalytic core - and a membrane F(1) domain - the membrane proton channel. These two domains are linked by a central stalk rotating inside the F(1) region and a stationary peripheral stalk. During catalysis, ATP synthesis in the catalytic domain of F(1) is coupled via a rotary mechanism of the central stalk subunits to proton translocation. In vivo, can only synthesize ATP although its ATP hydrolase activity can be activated artificially in vitro. May be essential for the assembly of F(1) and may play an important role in the incorporation of the hydrophobic subunit c into the F(1)-c oligomer rotor of the mitochondrial ATP synthase complex. This is ATP synthase F(1) complex subunit epsilon, mitochondrial from Bos taurus (Bovine).